Reading from the N-terminus, the 642-residue chain is MTLEITGSELIKSKLIDAPERCGVYRMFDVNKQVIYVGKAKNLKKRLTNYIKSDLDNKTLRMIANTCFLEYSITNSEVEALLLEAQLIKKFQPKFNILLKDDKSFPFIKLRLDHDFPQLLKYRGKTLNSGKFFGPFASSTEVNTTLTELQKIFKLRSCTDNYFNSRTRPCLQYEIKRCYAPCVGKINKEDYRDLVAQVKDFLQGRTKELQENLSKKMEELSSQMRFEEAAEIRDRIKALSYVQLKAGVSDIVKDADIIAIVEKNGHYCVEVFLYRAGQACGNIPYFPTSTENSTKEEVLEYFLLQFYQKQQVPAEIIINHEINDKENVIEAIKKINNITKLNIIIPISGGKAKLVQNAAINALFSLEQYLKKFAKNQEIMLEIKELFGLSEISERIEIYDNSHIQGKFAVGVMVVAGKAGFDKKEYRVFSLSSRNSSLSSHASPLSSRNLIAGSSSYFLDPVVKPRDDIVGDDYEMLRQVLTRRLTRLKNEPHKLPSLMIIDGGRGHLGVVKEVMDKFEMNIPFVCMSKGVDRNAGLEQFHMTGKEVFTLDKNLPIMKYLQILRDEAHNFAIKNHRLGRSRAIKLSSLDDIEGIGETRKKALLHYFGSYKAVCDATIDELTKVNGINKSLAEMIFRTLHKSL.

Residues 20–97 (ERCGVYRMFD…IKKFQPKFNI (78 aa)) form the GIY-YIG domain. The UVR domain occupies 207 to 242 (KELQENLSKKMEELSSQMRFEEAAEIRDRIKALSYV).

The protein belongs to the UvrC family. As to quaternary structure, interacts with UvrB in an incision complex.

The protein resides in the cytoplasm. In terms of biological role, the UvrABC repair system catalyzes the recognition and processing of DNA lesions. UvrC both incises the 5' and 3' sides of the lesion. The N-terminal half is responsible for the 3' incision and the C-terminal half is responsible for the 5' incision. The polypeptide is UvrABC system protein C (Rickettsia felis (strain ATCC VR-1525 / URRWXCal2) (Rickettsia azadi)).